The following is a 430-amino-acid chain: Probable FAD-dependent monooxygenase (430 aa).

The N-terminal stretch at 1 to 23 (MGSTSTPPHVLIIGAGITGLALA) is a signal peptide. An FAD-binding site is contributed by 9–37 (HVLIIGAGITGLALAQALRKHGVSFAVYE). N-linked (GlcNAc...) asparagine glycans are attached at residues N130 and N151. 307 to 330 (LEDWPTPPKGSWSNLGGTATLVGD) provides a ligand contact to FAD.

FAD serves as cofactor.

The sequence is that of Probable FAD-dependent monooxygenase from Arthroderma benhamiae (strain ATCC MYA-4681 / CBS 112371) (Trichophyton mentagrophytes).